The sequence spans 447 residues: Transcriptional enhancer factor TEF-4 (447 aa).

2 disordered regions span residues 1-46 (MGEP…GVWS) and 183-218 (TPFTLSLTPPSTDLPGYEPPQALSPLPPPTPSPPAW). Positions 11-20 (DDGSGWTGSE) are enriched in low complexity. A compositionally biased stretch (gly residues) spans 25 to 40 (EGTGGSEGAGGDGGPD). Positions 38–114 (GPDAEGVWSP…QVLARRKSRE (77 aa)) form a DNA-binding region, TEA. The tract at residues 172–447 (WNVPDVKPFS…QHHIYRLVRD (276 aa)) is transcriptional activation. Residues 183–206 (TPFTLSLTPPSTDLPGYEPPQALS) are compositionally biased toward low complexity. Residues 207–216 (PLPPPTPSPP) are compositionally biased toward pro residues.

Interacts with YAP1 and WWTR1/TAZ.

Its subcellular location is the nucleus. Its function is as follows. Transcription factor which plays a key role in the Hippo signaling pathway, a pathway involved in organ size control and tumor suppression by restricting proliferation and promoting apoptosis. The core of this pathway is composed of a kinase cascade wherein MST1/MST2, in complex with its regulatory protein SAV1, phosphorylates and activates LATS1/2 in complex with its regulatory protein MOB1, which in turn phosphorylates and inactivates YAP1 oncoprotein and WWTR1/TAZ. Acts by mediating gene expression of YAP1 and WWTR1/TAZ, thereby regulating cell proliferation, migration and epithelial mesenchymal transition (EMT) induction. Binds to the SPH and GT-IIC 'enhansons' (5'-GTGGAATGT-3'). May be involved in the gene regulation of neural development. Binds to the M-CAT motif. This Homo sapiens (Human) protein is Transcriptional enhancer factor TEF-4 (TEAD2).